A 659-amino-acid chain; its full sequence is MAAAVLMDRVQSCVTFEDVFVYFSREEWELLEEAQRFLYRDVMLENFALVATLGFWCEAEHEAPSEQSVSVEGVSQVRTAESGLFQKAHPCEMCDPLLKDILHLAEHQGSHLTQKLCTRGLCRRRFSFSANFYQHQKQHNGENCFRGDDGGASFVKSCTVHMLGRSFTCREEGMDLPDSSGLFQHQTTYNRVSPCRRTECMESFPHSSSLRQHQGDYDGQMLFSCGDEGKAFLDTFTLLDSQMTHAEVRPFRCLPCGNVFKEKSALINHRKIHSGEISHVCKECGKAFIHLHHLKMHQKFHTGKRHYTCSECGKAFSRKDTLVQHQRVHTGERSYDCSECGKAYSRSSHLVQHQRIHTGERPYKCNKCGKAFSRKDTLVQHQRFHTGERPYECSECGKFFSQSSHLIEHWRIHTGARPYECIECGKFFSHNSSLIKHRRVHTGARSYVCSKCGKAFGCKDTLVQHQIIHTGARPYECSECGKAFSRKDTLVQHQKIHTGERPYECGECGKFFSHSSNLIVHQRIHTGAKPYECNECGKCFSHNSSLILHQRVHTGARPYVCSECGKAYISSSHLVQHKKVHTGARPYECSECGKFFSRNSGLILHQRVHTGEKPYVCSECGKAYSRSSHLVRHQKAHTGERAHECNSFGGPLAASLKLV.

The KRAB domain maps to 14–88 (VTFEDVFVYF…TAESGLFQKA (75 aa)). C2H2-type zinc fingers lie at residues 89–111 (HPCE…QGSH), 115–139 (KLCT…QKQH), 251–273 (FRCL…RKIH), 279–301 (HVCK…QKFH), 307–329 (YTCS…QRVH), 335–357 (YDCS…QRIH), 363–385 (YKCN…QRFH), 391–413 (YECS…WRIH), 419–441 (YECI…RRVH), 447–469 (YVCS…QIIH), 475–497 (YECS…QKIH), 503–525 (YECG…QRIH), 531–553 (YECN…QRVH), 559–581 (YVCS…KKVH), 587–609 (YECS…QRVH), and 615–637 (YVCS…QKAH).

Belongs to the krueppel C2H2-type zinc-finger protein family. As to quaternary structure, probably part of a corepressor complex containing ZNF304, TRIM28, SETDB1 and DNMT1; leading to promoter hypermethylation and transcriptional silencing. Probably associates with Polycomb group (PcG) complexes; leading to trimethylation of 'Lys-27' of histone H3 (H3K27me3). Interacts with USP28. In terms of processing, deubiquitinated by USP28; the deubiquitination leads to the stabilization of ZNF304 from proteolytic degradation. As to expression, expressed in undifferentiated embryonic stem cells (ESCs). Expressed strongly in colorectal cancers cells (CRCs). Expressed strongly in ovarian carcinoma (OC) tumor cell lines compared to non-transformed ovarian epithelial cells (at protein level). Expressed in lymphoid tissues, thyroid, adrenal gland, prostate, pancreas and skeletal muscles.

It localises to the nucleus. Functionally, acts as a transcriptional regulator and plays a role in gene silencing. Probably forms a corepressor complex required for activated KRAS-mediated promoter hypermethylation and transcriptional silencing of several tumor suppressor genes (TSGs) or other tumor-related genes in colorectal cancer (CRC) cells. Also required to maintain a transcriptionally repressive state of genes in undifferentiated embryonic stem cells (ESCs) by inducing trimethylation of 'Lys-27' of histone H3 (H3K27me3) in a Polycomb group (PcG) complexes-dependent manner. Associates at promoter regions of TSGs and mediates the recruitment of the corepressor complex containing the scaffolding protein TRIM28, methyltransferase DNMT1 and histone methyltransferase SETDB1 and/or the PcG complexes at those sites. Transcription factor involved in the metastatic cascade process by inducing cell migration and proliferation and gain resistance to anoikis of ovarian carcinoma (OC) cells via integrin-mediated signaling pathways. Associates with the ITGB1 promoter and positively regulates beta-1 integrin transcription expression. Promotes angiogenesis. Promotes tumor growth. The protein is Zinc finger protein 304 of Homo sapiens (Human).